The following is a 59-amino-acid chain: Small, acid-soluble spore protein H 2 (59 aa).

It belongs to the SspH family.

It is found in the spore core. In Bacillus cytotoxicus (strain DSM 22905 / CIP 110041 / 391-98 / NVH 391-98), this protein is Small, acid-soluble spore protein H 2.